Consider the following 198-residue polypeptide: GTP-binding protein Di-Ras1 (198 aa).

Residues 17-22 (GVGKSS), 33-39 (RDTYIPT), 61-65 (DTTGS), 121-125 (NKCDE), Ala-151, and 151-152 (AK) contribute to the GTP site. The Effector region motif lies at 36–44 (YIPTIEDTY). The segment covering 178-192 (DGKRSGKQKRTDRVK) has biased composition (basic and acidic residues). Residues 178 to 198 (DGKRSGKQKRTDRVKGKCTLM) are disordered. Cys-195 is modified (cysteine methyl ester). Cys-195 is lipidated: S-geranylgeranyl cysteine. Residues 196–198 (TLM) constitute a propeptide, removed in mature form.

The protein belongs to the small GTPase superfamily. Di-Ras family. In terms of tissue distribution, highly expressed in heart and brain.

The protein localises to the cell membrane. Its function is as follows. Displays low GTPase activity and exists predominantly in the GTP-bound form. This chain is GTP-binding protein Di-Ras1 (DIRAS1), found in Homo sapiens (Human).